Here is a 371-residue protein sequence, read N- to C-terminus: UDP-N-acetylglucosamine--N-acetylmuramyl-(pentapeptide) pyrophosphoryl-undecaprenol N-acetylglucosamine transferase (371 aa).

Residues 10–12, Asn-124, Arg-166, Ser-196, and Gln-301 each bind UDP-N-acetyl-alpha-D-glucosamine; that span reads TGG.

The protein belongs to the glycosyltransferase 28 family. MurG subfamily.

It localises to the cell membrane. The enzyme catalyses di-trans,octa-cis-undecaprenyl diphospho-N-acetyl-alpha-D-muramoyl-L-alanyl-D-glutamyl-meso-2,6-diaminopimeloyl-D-alanyl-D-alanine + UDP-N-acetyl-alpha-D-glucosamine = di-trans,octa-cis-undecaprenyl diphospho-[N-acetyl-alpha-D-glucosaminyl-(1-&gt;4)]-N-acetyl-alpha-D-muramoyl-L-alanyl-D-glutamyl-meso-2,6-diaminopimeloyl-D-alanyl-D-alanine + UDP + H(+). It functions in the pathway cell wall biogenesis; peptidoglycan biosynthesis. Functionally, cell wall formation. Catalyzes the transfer of a GlcNAc subunit on undecaprenyl-pyrophosphoryl-MurNAc-pentapeptide (lipid intermediate I) to form undecaprenyl-pyrophosphoryl-MurNAc-(pentapeptide)GlcNAc (lipid intermediate II). In Moorella thermoacetica (strain ATCC 39073 / JCM 9320), this protein is UDP-N-acetylglucosamine--N-acetylmuramyl-(pentapeptide) pyrophosphoryl-undecaprenol N-acetylglucosamine transferase.